The chain runs to 456 residues: Glycerol-3-phosphate dehydrogenase [NAD(+)] At3g07690, cytosolic (456 aa).

NAD(+) is bound by residues 41–46 (GAGAWG), K189, and A228. Substrate is bound at residue K189. K278 (proton acceptor) is an active-site residue. Residues R340 and Q368 each contribute to the NAD(+) site. Residue 340–341 (RN) coordinates substrate.

It belongs to the NAD-dependent glycerol-3-phosphate dehydrogenase family. In terms of assembly, homodimer.

Its subcellular location is the cytoplasm. It carries out the reaction sn-glycerol 3-phosphate + NAD(+) = dihydroxyacetone phosphate + NADH + H(+). Functionally, required for glycerol-3-phosphate (G3P) accumulation during systemic acquired resistance (SAR) establishment. In Arabidopsis thaliana (Mouse-ear cress), this protein is Glycerol-3-phosphate dehydrogenase [NAD(+)] At3g07690, cytosolic.